The sequence spans 449 residues: Mannan endo-1,6-alpha-mannosidase DCW1 (449 aa).

Positions 1 to 21 are cleaved as a signal peptide; the sequence is MLVNKVIGLLGVLFATRFTNA. N-linked (GlcNAc...) asparagine glycans are attached at residues Asn-34, Asn-84, Asn-109, Asn-133, Asn-203, Asn-225, Asn-240, Asn-265, Asn-281, Asn-337, Asn-362, and Asn-420. Gly-428 is lipidated: GPI-anchor amidated glycine. The propeptide at 429 to 449 is removed in mature form; sequence AGIITAVIGISIVACALWLVF.

It belongs to the glycosyl hydrolase 76 family.

The protein resides in the cell membrane. It catalyses the reaction Random hydrolysis of (1-&gt;6)-alpha-D-mannosidic linkages in unbranched (1-&gt;6)-mannans.. In terms of biological role, required for normal synthesis of the cell wall. The protein is Mannan endo-1,6-alpha-mannosidase DCW1 (DCW1) of Saccharomyces cerevisiae (strain ATCC 204508 / S288c) (Baker's yeast).